The chain runs to 429 residues: MDVTSTLSLGDPLEPARKATADMLRSRDHSFSLPQPFYCDQRLFEIDMQEIFHKEWLIAGMTCEIPAKGNFLTLQIGKNPVLVIRGAEGQVHAFHNVCRHRGSRLCVSEKGKVAKLVCPYHQWTYELDGRLLFAGTEMGADFDMKEYGLKPIQVKTAGGYIFISLAENPPAIDDFLATLEHYMEPYDMENAKVAVQTTIREAANWKLVIENNRECYHCNGSHPELLKTLLEWDDVTDPRASQAFKDQVAACTSAWEAEKIPYAHASFGLRNRIVRMPLLDGTVSMTMDGKQGSKKLMGRIKNPDLGSMRILHLPHSWNHCMGDHLIVFTVWPISAQETLVTTKWLVHKDAVEGVDYDVARLREVWDATNDQDRRLAEENQRGINSDAYQPGPYSKTYEFGVINFLDWYSERMLNNLGEESAHVRKVAGS.

One can recognise a Rieske domain in the interval 56–163; the sequence is WLIAGMTCEI…VKTAGGYIFI (108 aa). [2Fe-2S] cluster-binding residues include cysteine 98, histidine 100, cysteine 118, and histidine 121. Residues histidine 217 and histidine 222 each coordinate Fe cation.

Belongs to the bacterial ring-hydroxylating dioxygenase alpha subunit family. The system is composed of an oxygenase subunit (GbcA) and a reductase subunit (GbcB). Requires [2Fe-2S] cluster as cofactor. It depends on Fe cation as a cofactor.

The enzyme catalyses glycine betaine + NADH + O2 + H(+) = N,N-dimethylglycine + formaldehyde + NAD(+) + H2O. Its function is as follows. Involved in degradation of glycine betaine. Part of a Rieske-type oxygenase system that catalyzes the conversion of glycine betaine (GB) to dimethylglycine (DMG). This subunit is the terminal oxygenase component of the system. In Pseudomonas aeruginosa (strain UCBPP-PA14), this protein is Glycine betaine monooxygenase oxygenase subunit.